The chain runs to 76 residues: Protein CsbA (76 aa).

Residues 1 to 5 are Extracellular-facing; it reads MITKA. Residues 6-22 traverse the membrane as a helical segment; the sequence is VFALFFPFMLVVLFTRV. Over 23–27 the chain is Cytoplasmic; the sequence is TFNHY. The helical transmembrane segment at 28 to 44 threads the bilayer; that stretch reads VAIALTAALLFASYLKG. Residues 45-49 are Extracellular-facing; sequence YTETY. The helical transmembrane segment at 50–66 threads the bilayer; it reads FIVGLDVVSLVAGGLYM. At 67 to 76 the chain is on the cytoplasmic side; the sequence is AKKAAEKKEE.

It localises to the cell membrane. The polypeptide is Protein CsbA (csbA) (Bacillus subtilis (strain 168)).